The following is a 673-amino-acid chain: Probable urea active transporter 2 (673 aa).

14 consecutive transmembrane segments (helical) span residues 8–28 (GYGYGFALGLGAAFALLMAII), 83–103 (IMGGFMYGVGGTIQITLFLFL), 132–152 (VYLFYCISTNVLVSSLLLLGG), 164–184 (TVAACFLLPLGVMVYTTLGGL), 196–218 (VMIYIILIVTCYTVYCSSSLIGS), 249–269 (MMYLTWSVMIGGLSSVFGDPG), 287–307 (LMGGLCWWIIPMALGSSAGLA), 336–356 (IYGMASIFGKSGAAAGLVMLF), 391–411 (QLVRTAHLSVIGFSLFIGALS), 424–446 (LLTFLGIILTPEVSAVTLCLFWN), 451–471 (FSLVVGAPFGTITGVVCWLAS), 492–512 (FVGNIVSMASSPLYIVLLSYI), 559–579 (IGINLFILIGCYVIIPTALLG), and 592–612 (LIIVCLIWILVAAIYIILFPL).

This sequence belongs to the sodium:solute symporter (SSF) (TC 2.A.21) family.

It localises to the endoplasmic reticulum membrane. In terms of biological role, involved in active transport of urea. The polypeptide is Probable urea active transporter 2 (dur3-2) (Schizosaccharomyces pombe (strain 972 / ATCC 24843) (Fission yeast)).